The chain runs to 998 residues: Ephrin type-B receptor 3 (998 aa).

A signal peptide spans 1-33 (MARARPPPPPSPPPGLLPLLPPLLLLPLLLLPA). Residues 34–559 (GCRALEETLM…AQQLQEQLPL (526 aa)) are Extracellular-facing. Residues 39-217 (EETLMDTKWV…FYKKCASTTA (179 aa)) enclose the Eph LBD domain. Cysteine 81 and cysteine 199 are oxidised to a cystine. 2 consecutive Fibronectin type-III domains span residues 339–451 (VPSP…TNQA) and 452–545 (APSE…TTSE). N-linked (GlcNAc...) asparagine glycans are attached at residues asparagine 351 and asparagine 445. The chain crosses the membrane as a helical span at residues 560–580 (IVGSATAGLVFVVAVVVIAIV). The Cytoplasmic segment spans residues 581–998 (CLRKQRHGSD…QMNQTLPVQV (418 aa)). The residue at position 614 (tyrosine 614) is a Phosphotyrosine; by autocatalysis. In terms of domain architecture, Protein kinase spans 633–896 (VKIEEVIGAG…QIVNTLDKLI (264 aa)). Residues 639–647 (IGAGEFGEV) and lysine 665 contribute to the ATP site. Aspartate 758 functions as the Proton acceptor in the catalytic mechanism. In terms of domain architecture, SAM spans 925–989 (TTFTTVGDWL…LSSIQDMRLQ (65 aa)). The PDZ-binding motif lies at 996 to 998 (VQV).

The protein belongs to the protein kinase superfamily. Tyr protein kinase family. Ephrin receptor subfamily. In terms of assembly, heterotetramer upon binding of the ligand. The heterotetramer is composed of an ephrin dimer and a receptor dimer. Oligomerization is probably required to induce biological responses. Post-translationally, phosphorylated. Autophosphorylates upon ligand-binding. Autophosphorylation on Tyr-614 is required for interaction with SH2 domain-containing proteins. Ubiquitinated by RNF186, mainly through 'Lys-48' and 'Lys-63'-linked polyubiquitin chains. In terms of tissue distribution, ubiquitous.

It is found in the cell membrane. It localises to the cell projection. Its subcellular location is the dendrite. The enzyme catalyses L-tyrosyl-[protein] + ATP = O-phospho-L-tyrosyl-[protein] + ADP + H(+). Functionally, receptor tyrosine kinase which binds promiscuously transmembrane ephrin-B family ligands residing on adjacent cells, leading to contact-dependent bidirectional signaling into neighboring cells. The signaling pathway downstream of the receptor is referred to as forward signaling while the signaling pathway downstream of the ephrin ligand is referred to as reverse signaling. Generally has an overlapping and redundant function with EPHB2. Like EPHB2, functions in axon guidance during development regulating for instance the neurons forming the corpus callosum and the anterior commissure, 2 major interhemispheric connections between the temporal lobes of the cerebral cortex. In addition to its role in axon guidance also plays an important redundant role with other ephrin-B receptors in development and maturation of dendritic spines and the formation of excitatory synapses. Controls other aspects of development through regulation of cell migration and positioning. This includes angiogenesis, palate development and thymic epithelium development for instance. Forward and reverse signaling through the EFNB2/EPHB3 complex also regulate migration and adhesion of cells that tubularize the urethra and septate the cloaca. Finally, plays an important role in intestinal epithelium differentiation segregating progenitor from differentiated cells in the crypt. The chain is Ephrin type-B receptor 3 (EPHB3) from Homo sapiens (Human).